The primary structure comprises 322 residues: Protein-L-isoaspartate O-methyltransferase (322 aa).

The tract at residues 1–101 is disordered; it reads MSGERAKRFP…AKQGDRSAAP (101 aa). Residues 14 to 29 are compositionally biased toward basic and acidic residues; that stretch reads EDLKREPRKPEGRVAE. Low complexity-rich tracts occupy residues 33–51 and 76–91; these read AGDAARQRLTAAAAAPAAA and HAPAAPGAAKRAPQGG. Ser170 is an active-site residue.

It belongs to the methyltransferase superfamily. L-isoaspartyl/D-aspartyl protein methyltransferase family.

The protein resides in the cytoplasm. It carries out the reaction [protein]-L-isoaspartate + S-adenosyl-L-methionine = [protein]-L-isoaspartate alpha-methyl ester + S-adenosyl-L-homocysteine. Functionally, catalyzes the methyl esterification of L-isoaspartyl residues in peptides and proteins that result from spontaneous decomposition of normal L-aspartyl and L-asparaginyl residues. It plays a role in the repair and/or degradation of damaged proteins. The chain is Protein-L-isoaspartate O-methyltransferase from Burkholderia pseudomallei (strain 1710b).